Reading from the N-terminus, the 257-residue chain is Chymotrypsin-like protease VLCTLP (257 aa).

The N-terminal stretch at 1–18 (MVLIRVLANLLLLQLSYA) is a signal peptide. The propeptide occupies 19-24 (QKSSEL). One can recognise a Peptidase S1 domain in the interval 25 to 248 (VVGGDECNIN…YSDWIQSIIA (224 aa)). Disulfide bonds link cysteine 31-cysteine 162, cysteine 49-cysteine 65, cysteine 97-cysteine 255, cysteine 141-cysteine 209, cysteine 173-cysteine 188, and cysteine 199-cysteine 224. N-linked (GlcNAc...) asparagine glycosylation occurs at asparagine 44. The Charge relay system role is filled by histidine 64. A glycan (N-linked (GlcNAc...) asparagine) is linked at asparagine 100. Catalysis depends on aspartate 109, which acts as the Charge relay system. Residues asparagine 116 and asparagine 153 are each glycosylated (N-linked (GlcNAc...) asparagine). The Charge relay system role is filled by serine 203. Asparagine 250 is a glycosylation site (N-linked (GlcNAc...) asparagine).

It belongs to the peptidase S1 family. Snake venom subfamily. As to quaternary structure, monomer. Post-translationally, partial deglycosylation has not effect on enzyme activity. As to expression, expressed by the venom gland.

Its subcellular location is the secreted. Inhibited by PMSF. Functionally, snake venom serine protease with tyrosine-specific chymotrypsin-like activity. Hydrolyzes the N-acetyl-L-tyrosine ethyl ester (ATEE). Has weak fibrinogenolytic activity. Weakly hydrolyzes azocasein, Aalpha-chain (FGA) and more slowly Bbeta-chain (FGB) of fibrinogen. Optimal substrates are angiotensins I and II (AGT). In Macrovipera lebetinus (Levantine viper), this protein is Chymotrypsin-like protease VLCTLP.